The chain runs to 728 residues: Methylmalonyl-CoA mutase large subunit (728 aa).

Residues Tyr75, Met78, Arg82, Thr85, Arg87, Tyr89, and Ser114 each contribute to the (R)-methylmalonyl-CoA site. Residues Phe117 and Ala139 each contribute to the cob(II)alamin site. Residues Thr195 and Gln197 each contribute to the (R)-methylmalonyl-CoA site. 2 residues coordinate cob(II)alamin: Val206 and Arg207. (R)-methylmalonyl-CoA contacts are provided by Arg207, His244, Arg283, and Ser285. Positions 333, 370, 373, 609, 610, 611, 612, 655, 657, 686, and 709 each coordinate cob(II)alamin. Residues 597–728 (RPRILLAKMG…VKKLRASLDA (132 aa)) form the B12-binding domain.

Belongs to the methylmalonyl-CoA mutase family. Heterodimer of an alpha and a beta chain. Requires adenosylcob(III)alamin as cofactor.

It carries out the reaction (R)-methylmalonyl-CoA = succinyl-CoA. Catalyzes the reversible conversion of succinyl-CoA to (R)-methylmalonyl-CoA through a radical mechanism. Is involved in the fermentation of pyruvate to propanoate that occurs in Propionibacteria. This is Methylmalonyl-CoA mutase large subunit (mutB) from Propionibacterium freudenreichii subsp. shermanii.